A 346-amino-acid chain; its full sequence is Phospholipase A1 (346 aa).

The first 26 residues, 1 to 26, serve as a signal peptide directing secretion; it reads MRKFAAIFVVFFVQCTHLYSLAQARA. The propeptide occupies 27–37; that stretch reads EPDPGVVEYLK. N44 and N72 each carry an N-linked (GlcNAc...) asparagine glycan. S167 acts as the Nucleophile in catalysis. N-linked (GlcNAc...) asparagine glycosylation is present at N185. Catalysis depends on charge relay system residues D195 and H258.

This sequence belongs to the AB hydrolase superfamily. Lipase family. Post-translationally, contains six disulfide bonds. N-glycosylated; contains mannose. Expressed by the venom gland.

Its subcellular location is the secreted. The catalysed reaction is a 1,2-diacyl-sn-glycero-3-phosphocholine + H2O = a 2-acyl-sn-glycero-3-phosphocholine + a fatty acid + H(+). In terms of biological role, catalyzes the hydrolysis of phosphatidylcholine with phospholipase A1 activity. Induces hemolytic activity. Acts as an allergen. The protein is Phospholipase A1 of Solenopsis invicta (Red imported fire ant).